The primary structure comprises 289 residues: ATP synthase gamma chain (289 aa).

The protein belongs to the ATPase gamma chain family. In terms of assembly, F-type ATPases have 2 components, CF(1) - the catalytic core - and CF(0) - the membrane proton channel. CF(1) has five subunits: alpha(3), beta(3), gamma(1), delta(1), epsilon(1). CF(0) has three main subunits: a, b and c.

It localises to the cell inner membrane. In terms of biological role, produces ATP from ADP in the presence of a proton gradient across the membrane. The gamma chain is believed to be important in regulating ATPase activity and the flow of protons through the CF(0) complex. This chain is ATP synthase gamma chain, found in Pasteurella multocida (strain Pm70).